A 139-amino-acid chain; its full sequence is Putative nickel-responsive regulator (139 aa).

4 residues coordinate Ni(2+): His-79, His-90, His-92, and Cys-98.

The protein belongs to the transcriptional regulatory CopG/NikR family. It depends on Ni(2+) as a cofactor.

Functionally, transcriptional regulator. In Solidesulfovibrio magneticus (strain ATCC 700980 / DSM 13731 / RS-1) (Desulfovibrio magneticus), this protein is Putative nickel-responsive regulator.